The following is a 399-amino-acid chain: Phosphoglycerate kinase (399 aa).

Residues 21 to 23 (DFN), R36, 59 to 62 (HLGR), R120, and R158 each bind substrate. ATP is bound by residues K209, G297, E328, and 355-358 (GGDS).

Belongs to the phosphoglycerate kinase family. In terms of assembly, monomer.

It localises to the cytoplasm. The catalysed reaction is (2R)-3-phosphoglycerate + ATP = (2R)-3-phospho-glyceroyl phosphate + ADP. Its pathway is carbohydrate degradation; glycolysis; pyruvate from D-glyceraldehyde 3-phosphate: step 2/5. In Streptococcus thermophilus (strain ATCC BAA-250 / LMG 18311), this protein is Phosphoglycerate kinase.